The sequence spans 618 residues: MDLNGECKGGDGFIDRSRVRILLCDNDSTSLGEVFTLLSECSYQVTAVKSARQVIDALNAEGPDIDIILAEIDLPMAKGMKMLRYITRDKDLRRIPVIMMSRQDEVPVVVKCLKLGAADYLVKPLRTNELLNLWTHMWRRRRMLGLAEKNMLSYDFDLVGSDQSDPNTNSTNLFSDDTDDRSLRSTNPQRGNLSHQENEWSVATAPVHARDGGLGADGTATSSLAVTAIEPPLDHLAGSHHEPMKRNSNPAQFSSAPKKSRLKIGESSAFFTYVKSTVLRTNGQDPPLVDGNGSLHLHRGLAEKFQVVASEGINNTKQARRATPKSTVLRTNGQDPPLVNGNGSHHLHRGAAEKFQVVASEGINNTKQAHRSRGTEQYHSQGETLQNGASYPHSLERSRTLPTSMESHGRNYQEGNMNIPQVAMNRSKDSSQVDGSGFSAPNAYPYYMHGVMNQVMMQSAAMMPQYGHQIPHCQPNHPNGMTGYPYYHHPMNTSLQHSQMSLQNGQMSMVHHSWSPAGNPPSNEVRVNKLDRREEALLKFRRKRNQRCFDKKIRYVNRKRLAERRPRVKGQFVRKMNGVNVDLNGQPDSADYDDEEEEEEEEEEENRDSSPQDDALGT.

A Response regulatory domain is found at 20-138 (RILLCDNDST…ELLNLWTHMW (119 aa)). Composition is skewed to polar residues over residues 161-174 (SDQS…TNLF), 187-200 (NPQR…ENEW), 246-257 (RNSNPAQFSSAP), 324-334 (PKSTVLRTNGQ), and 375-389 (TEQY…QNGA). Disordered stretches follow at residues 161-200 (SDQS…ENEW), 239-260 (SHHE…PKKS), 316-338 (TKQA…DPPL), 368-395 (QAHR…PHSL), and 573-618 (VRKM…ALGT). The 43-residue stretch at 533 to 575 (REEALLKFRRKRNQRCFDKKIRYVNRKRLAERRPRVKGQFVRK) folds into the CCT domain. Residues 588-610 (DSADYDDEEEEEEEEEEENRDSS) are a coiled coil. The span at 590–606 (ADYDDEEEEEEEEEEEN) shows a compositional bias: acidic residues.

Belongs to the ARR-like family. Interacts with PIF1, PIL2, PIF3, PIF4, PIL5, PIL6, ABI3 (via C-terminus), ADO1/ZTL, ADO2, APRR3 and TCP21/CHE. Both the phosphorylated and the dephosphorylated forms interact with ADO1/ZLT. Post-translationally, phosphorylated; during the day. Phosphorylation is required for optimal interaction with APRR3. As to expression, expressed in leaves, flowers and siliques. Restricted to the vasculature.

The protein localises to the nucleus. In terms of biological role, controls photoperiodic flowering response. Component of the circadian clock. Expression of several members of the ARR-like family is controlled by circadian rhythm. The particular coordinated sequential expression of APRR9, APRR7, APRR5, APRR3 and APPR1 result to circadian waves that may be at the basis of the endogenous circadian clock. Positive regulator of CCA1 and LHY expression. This chain is Two-component response regulator-like APRR1 (APRR1), found in Arabidopsis thaliana (Mouse-ear cress).